A 976-amino-acid chain; its full sequence is Peptidylglycine alpha-amidating monooxygenase (976 aa).

The first 25 residues, M1 to A25, serve as a signal peptide directing secretion. A peptidylglycine alpha-hydroxylating monooxygenase region spans residues M1–G497. Residues F26–R35 constitute a propeptide that is removed on maturation. The Intragranular portion of the chain corresponds to F36–G866. 5 cysteine pairs are disulfide-bonded: C47-C186, C81-C126, C114-C131, C227-C334, and C293-C315. Cu(2+) is bound by residues H107 and H108. Cu(2+) is bound by residues H172, H242, H244, and M314. The segment at D498 to V820 is peptidyl-alpha-hydroxyglycine alpha-amidating lyase. NHL repeat units lie at residues V501–D544, A570–H611, L620–S665, and G673–D717. V520 is a Ca(2+) binding site. A protein is bound at residue R533. H585 provides a ligand contact to Zn(2+). L587 is a Ca(2+) binding site. Residues C634 and C655 are joined by a disulfide bond. An a protein-binding site is contributed by Y654. H690 is a Zn(2+) binding site. Residues C702 and C713 are joined by a disulfide bond. Residue R706 participates in a protein binding. The N-linked (GlcNAc...) asparagine glycan is linked to N765. The NHL 5 repeat unit spans residues G769–T812. V774 is modified (sulfotyrosine). H786 is a Zn(2+) binding site. Residue D787 coordinates Ca(2+). A Sulfotyrosine modification is found at E792. The helical transmembrane segment at V867–I890 threads the bilayer. At R891–S976 the chain is on the cytoplasmic side. S921, S932, and S945 each carry phosphoserine. Residues N928–S945 form an interaction with RASSF9 region. The tract at residues G940–S976 is disordered. Position 946 is a phosphothreonine (T946). Residue S949 is modified to Phosphoserine. Residues E952–Y965 are compositionally biased toward acidic residues. Phosphothreonine is present on T959. The residue at position 961 (S961) is a Phosphoserine.

The protein in the C-terminal section; belongs to the peptidyl-alpha-hydroxyglycine alpha-amidating lyase family. It in the N-terminal section; belongs to the copper type II ascorbate-dependent monooxygenase family. In terms of assembly, monomer. Interacts with RASSF9. Zn(2+) is required as a cofactor. Requires Cu(2+) as cofactor.

The protein localises to the cytoplasmic vesicle. Its subcellular location is the secretory vesicle membrane. The protein resides in the membrane. It localises to the secreted. The catalysed reaction is a [peptide]-C-terminal glycine + 2 L-ascorbate + O2 = a [peptide]-C-terminal (2S)-2-hydroxyglycine + 2 monodehydro-L-ascorbate radical + H2O. It catalyses the reaction a [peptide]-C-terminal (2S)-2-hydroxyglycine = a [peptide]-C-terminal amide + glyoxylate. It carries out the reaction N-dodecanoylglycine + 2 L-ascorbate + O2 = N-dodecanoyl-(2S)-hydroxyglycine + 2 monodehydro-L-ascorbate radical + H2O. The enzyme catalyses N-dodecanoyl-(2S)-hydroxyglycine = dodecanamide + glyoxylate. The catalysed reaction is N-(9Z,12Z,15Z)-octadecatrienoylglycine + 2 L-ascorbate + O2 = N-(9Z,12Z,15Z)-octadecatrienoyl-(2S)-hydroxyglycine + 2 monodehydro-L-ascorbate radical + H2O. It catalyses the reaction N-(9Z,12Z,15Z)-octadecatrienoyl-(2S)-hydroxyglycine = (9Z,12Z,15Z)-octadecatrienamide + glyoxylate. It carries out the reaction N-(9Z-octadecenoyl)glycine + 2 L-ascorbate + O2 = N-(9Z-octadecenoyl)-(2S)-hydroxyglycine + 2 monodehydro-L-ascorbate radical + H2O. The enzyme catalyses N-(9Z-octadecenoyl)-(2S)-hydroxyglycine = (9Z)-octadecenamide + glyoxylate. The catalysed reaction is N-tetradecanoylglycine + 2 L-ascorbate + O2 = N-tetradecanoyl-(2S)-hydroxyglycine + 2 monodehydro-L-ascorbate radical + H2O. It catalyses the reaction N-tetradecanoyl-(2S)-hydroxyglycine = tetradecamide + glyoxylate. It carries out the reaction N-decanoylglycine + 2 L-ascorbate + O2 = N-decanoyl-(2S)-hydroxyglycine + 2 monodehydro-L-ascorbate radical + H2O. The enzyme catalyses N-decanoyl-(2S)-hydroxyglycine = decanamide + glyoxylate. The catalysed reaction is N-octanoylglycine + 2 L-ascorbate + O2 = N-octanoyl-(2S)-hydroxyglycine + 2 monodehydro-L-ascorbate radical + H2O. It catalyses the reaction N-octanoyl-(2S)-hydroxyglycine = octanamide + glyoxylate. With respect to regulation, PAM activity is inhibited by EDTA, phenylglyoxal and diethyl pyrocarbonate. PAL activity is stimulated by cadmium and inhibited by mercury. Functionally, bifunctional enzyme that catalyzes amidation of the C-terminus of proteins. Alpha-amidation is present at the C-terminus of many endocrine hormones and neuropeptides and is required for their activity. C-terminal amidation also takes place in response to protein fragmentation triggered by oxidative stress, promoting degradation of amidated protein fragments by the proteasome. Alpha-amidation involves two sequential reactions, both of which are catalyzed by separate catalytic domains of the enzyme. The first step, catalyzed by peptidyl alpha-hydroxylating monooxygenase (PHM) domain, is the copper-, ascorbate-, and O2- dependent stereospecific hydroxylation (with S stereochemistry) at the alpha-carbon (C-alpha) of the C-terminal glycine of the peptidylglycine substrate. The second step, catalyzed by the peptidylglycine amidoglycolate lyase (PAL) domain, is the zinc-dependent cleavage of the N-C-alpha bond, producing the alpha-amidated peptide and glyoxylate. Similarly, catalyzes the two-step conversion of an N-fatty acylglycine to a primary fatty acid amide and glyoxylate. The protein is Peptidylglycine alpha-amidating monooxygenase of Rattus norvegicus (Rat).